Reading from the N-terminus, the 450-residue chain is Neutral protease 2 homolog AFUB_070680 (450 aa).

An N-terminal signal peptide occupies residues 1–19 (MKITALASAILAVAQGALA). Positions 20-172 (LPARAPALDI…PASIKPLDRR (153 aa)) are excised as a propeptide. Intrachain disulfides connect cysteine 179/cysteine 251 and cysteine 258/cysteine 276. Residue histidine 300 participates in Zn(2+) binding. Residue glutamate 301 is part of the active site. The Zn(2+) site is built by histidine 304 and aspartate 315. Residues 364–392 (QPGQTEPGTQTMWDGYSQPGQTEPGTQTM) show a composition bias toward polar residues. Positions 364-416 (QPGQTEPGTQTMWDGYSQPGQTEPGTQTMWDGYSQPGQTEPGTQTTWDGYSQP) are disordered. Over residues 398–409 (QPGQTEPGTQTT) the composition is skewed to low complexity.

Belongs to the peptidase M35 family. Zn(2+) serves as cofactor.

It localises to the secreted. The enzyme catalyses Preferential cleavage of bonds with hydrophobic residues in P1'. Also 3-Asn-|-Gln-4 and 8-Gly-|-Ser-9 bonds in insulin B chain.. In terms of biological role, secreted metalloproteinase that allows assimilation of proteinaceous substrates. Shows high activities on basic nuclear substrates such as histone and protamine. May be involved in virulence. In Aspergillus fumigatus (strain ATCC MYA-4609 / CBS 101355 / FGSC A1100 / Af293) (Neosartorya fumigata), this protein is Neutral protease 2 homolog AFUB_070680.